The chain runs to 106 residues: Large ribosomal subunit protein uL24 (106 aa).

Belongs to the universal ribosomal protein uL24 family. Part of the 50S ribosomal subunit.

In terms of biological role, one of two assembly initiator proteins, it binds directly to the 5'-end of the 23S rRNA, where it nucleates assembly of the 50S subunit. Its function is as follows. One of the proteins that surrounds the polypeptide exit tunnel on the outside of the subunit. This chain is Large ribosomal subunit protein uL24, found in Porphyromonas gingivalis (strain ATCC 33277 / DSM 20709 / CIP 103683 / JCM 12257 / NCTC 11834 / 2561).